The primary structure comprises 492 residues: N-succinylglutamate 5-semialdehyde dehydrogenase (492 aa).

220–225 (GSASTG) contacts NAD(+). Catalysis depends on residues Glu243 and Cys277.

The protein belongs to the aldehyde dehydrogenase family. AstD subfamily.

It catalyses the reaction N-succinyl-L-glutamate 5-semialdehyde + NAD(+) + H2O = N-succinyl-L-glutamate + NADH + 2 H(+). It functions in the pathway amino-acid degradation; L-arginine degradation via AST pathway; L-glutamate and succinate from L-arginine: step 4/5. Its function is as follows. Catalyzes the NAD-dependent reduction of succinylglutamate semialdehyde into succinylglutamate. The polypeptide is N-succinylglutamate 5-semialdehyde dehydrogenase (Salmonella dublin (strain CT_02021853)).